Consider the following 184-residue polypeptide: Protein Syd (184 aa).

This sequence belongs to the Syd family.

The protein resides in the cell inner membrane. In terms of biological role, interacts with the SecY protein in vivo. May bind preferentially to an uncomplexed state of SecY, thus functioning either as a chelating agent for excess SecY in the cell or as a regulatory factor that negatively controls the translocase function. In Edwardsiella ictaluri (strain 93-146), this protein is Protein Syd.